The sequence spans 420 residues: Serine/threonine-protein kinase PCRK2 (420 aa).

Residues 1-64 (MKCFLFPLGD…SNTSMSAREN (64 aa)) form a disordered region. Residues 22-36 (SPTSNFSDVNKSGSD) show a composition bias toward polar residues. Positions 42-58 (VSGTSTVSSTGRNSNTS) are enriched in low complexity. Thr70 carries the phosphothreonine modification. The region spanning 81-366 (FSRSGMIGEG…EVLEMVTKIV (286 aa)) is the Protein kinase domain. Residues 87-95 (IGEGGFGCV) and Lys115 each bind ATP. Tyr164 carries the phosphotyrosine modification. Asp215 serves as the catalytic Proton acceptor. Ser219 and Ser249 each carry phosphoserine. A phosphothreonine mark is found at Thr250 and Thr255. Tyr263 carries the phosphotyrosine modification. A disordered region spans residues 369–396 (SSPGNGGKKPQLVPLKSQETSRVEEGKN). A compositionally biased stretch (basic and acidic residues) spans 387 to 396 (ETSRVEEGKN).

Belongs to the protein kinase superfamily. Ser/Thr protein kinase family. As to quaternary structure, interacts with FLS2.

It localises to the cell membrane. The enzyme catalyses L-seryl-[protein] + ATP = O-phospho-L-seryl-[protein] + ADP + H(+). The catalysed reaction is L-threonyl-[protein] + ATP = O-phospho-L-threonyl-[protein] + ADP + H(+). Functions redundantly with PCRK1 in basal resistance against bacterial pathogens and in regulation of plant immunity. Functions together with PCRK1 downstream of the pathogen-associated molecular pattern (PAMP) receptor FLS2. Contributes to the induction of SARD1 and CBP60G, which are transcriptional activator of ICS1, an enzyme involved in salicylate (SA) biosynthesis upon pathogen attack. The protein is Serine/threonine-protein kinase PCRK2 of Arabidopsis thaliana (Mouse-ear cress).